We begin with the raw amino-acid sequence, 300 residues long: Protoheme IX farnesyltransferase (300 aa).

9 consecutive transmembrane segments (helical) span residues 24–44 (VTQL…PGMV), 46–66 (WHVL…AFAI), 94–114 (PQIL…LYTF), 118–138 (LTMW…TLLL), 146–166 (IVIG…AVTG), 172–192 (AWIL…VLAL), 217–237 (LHIL…FISG), 239–259 (SGAV…AYAW), and 278–298 (IVYL…RPLL).

Belongs to the UbiA prenyltransferase family. Protoheme IX farnesyltransferase subfamily.

It is found in the cell inner membrane. The catalysed reaction is heme b + (2E,6E)-farnesyl diphosphate + H2O = Fe(II)-heme o + diphosphate. It participates in porphyrin-containing compound metabolism; heme O biosynthesis; heme O from protoheme: step 1/1. Functionally, converts heme B (protoheme IX) to heme O by substitution of the vinyl group on carbon 2 of heme B porphyrin ring with a hydroxyethyl farnesyl side group. This is Protoheme IX farnesyltransferase from Burkholderia cenocepacia (strain HI2424).